Here is a 418-residue protein sequence, read N- to C-terminus: D-inositol 3-phosphate glycosyltransferase 1 (418 aa).

UDP-N-acetyl-alpha-D-glucosamine-binding positions include glutamine 24–proline 25 and glycine 32. Residues aspartate 29–asparagine 34, lysine 87, histidine 115, serine 139, and glutamine 159 each bind 1D-myo-inositol 3-phosphate. Residues arginine 233 and lysine 238 each coordinate UDP-N-acetyl-alpha-D-glucosamine. Positions 308, 309, and 311 each coordinate Mg(2+). 2 residues coordinate UDP-N-acetyl-alpha-D-glucosamine: glutamate 321 and glutamate 329. A Mg(2+)-binding site is contributed by threonine 335.

Belongs to the glycosyltransferase group 1 family. MshA subfamily. In terms of assembly, homodimer.

The enzyme catalyses 1D-myo-inositol 3-phosphate + UDP-N-acetyl-alpha-D-glucosamine = 1D-myo-inositol 2-acetamido-2-deoxy-alpha-D-glucopyranoside 3-phosphate + UDP + H(+). Functionally, catalyzes the transfer of a N-acetyl-glucosamine moiety to 1D-myo-inositol 3-phosphate to produce 1D-myo-inositol 2-acetamido-2-deoxy-glucopyranoside 3-phosphate in the mycothiol biosynthesis pathway. The sequence is that of D-inositol 3-phosphate glycosyltransferase 1 from Catenulispora acidiphila (strain DSM 44928 / JCM 14897 / NBRC 102108 / NRRL B-24433 / ID139908).